Reading from the N-terminus, the 209-residue chain is Vacuolar protein sorting-associated protein 28 homolog 1 (209 aa).

One can recognise a VPS28 N-terminal domain in the interval 1–99; that stretch reads MEVKLWNDKR…TSGVPATVEH (99 aa). The VPS28 C-terminal domain occupies 109–205; that stretch reads SSASVVAECV…SYNSFMAALP (97 aa).

It belongs to the VPS28 family. In terms of assembly, component of the endosomal sorting required for transport complex I (ESCRT-I), composed of ELC, VPS28 and VPS37. Interacts with ELC.

Its subcellular location is the endosome. Functionally, component of the ESCRT-I complex (endosomal sorting complex required for transport I), a regulator of vesicular trafficking process. Required for the sorting of endocytic ubiquitinated cargos into multivesicular bodies (MVBs). Mediates the association to the ESCRT-0 complex. The chain is Vacuolar protein sorting-associated protein 28 homolog 1 (VPS28-1) from Arabidopsis thaliana (Mouse-ear cress).